Consider the following 317-residue polypeptide: Melanoma-associated antigen 4 (317 aa).

Basic and acidic residues predominate over residues 1–14 (MSSEQKSQHCKPEE). The tract at residues 1 to 102 (MSSEQKSQHC…EEGPSTSPDA (102 aa)) is disordered. The span at 66-82 (PQGASALPTTISFTCWR) shows a compositional bias: polar residues. In terms of domain architecture, MAGE spans 110–309 (LSNKVDELAH…IAYPSLREAA (200 aa)).

In terms of tissue distribution, expressed in many tumors of several types, such as melanoma, head and neck squamous cell carcinoma, lung carcinoma and breast carcinoma, but not in normal tissues except for testes and placenta.

Its function is as follows. Regulates cell proliferation through the inhibition of cell cycle arrest at the G1 phase. Also negatively regulates p53-mediated apoptosis. The polypeptide is Melanoma-associated antigen 4 (MAGEA4) (Homo sapiens (Human)).